The following is a 470-amino-acid chain: Dendritic cell-specific transmembrane protein (470 aa).

Residues 1 to 34 lie on the Cytoplasmic side of the membrane; sequence MGIWTSGTDIFLSLWEIYVSPRSPGWMDFIQHLG. Residues 35–55 traverse the membrane as a helical segment; it reads VCCLVALISVGLLSVAACWFL. Residues 56-57 lie on the Extracellular side of the membrane; the sequence is PS. Residues 58–78 form a helical membrane-spanning segment; that stretch reads IIAAAASWIITCVLLCCSKHA. Residues 79 to 97 lie on the Cytoplasmic side of the membrane; that stretch reads RCFILLVFLSCGLREGRNA. A helical membrane pass occupies residues 98–118; the sequence is LIAAGTGIVILGHVENIFHNF. The Extracellular portion of the chain corresponds to 119–209; that stretch reads KGLLDGMTCN…MATTTEVLSS (91 aa). A helical membrane pass occupies residues 210–230; the sequence is LGQKLLAFAGLSLVLLGTGLF. Topologically, residues 231 to 292 are cytoplasmic; that stretch reads MKRFLGPCGW…FWPTPKERKN (62 aa). The helical transmembrane segment at 293–313 threads the bilayer; sequence LGLFFLPILIHLCIWVLFAAV. Over 314–376 the chain is Extracellular; that stretch reads DYLLYRLIFS…PKPKFLLSET (63 aa). A helical transmembrane segment spans residues 377–397; the sequence is WVPLSVILLILVMLGLLSSIL. Residues 398-470 lie on the Cytoplasmic side of the membrane; it reads MQLKILVSAS…QMDMASADKS (73 aa).

In terms of assembly, monomer. Homodimer. Isoform 1 interacts (via the C-terminus cytoplasmic tail) with OS9 isoform 1 (via the C-terminus tail); the interaction induces DCSTAMP redistribution to the endoplasmic reticulum-Golgi intermediate compartment. Isoform 1 interacts (via the C-terminus cytoplasmic tail) with OS9 isoform 2 (via the C-terminus tail). Interacts with CREB3. Post-translationally, glycosylated. Preferentially expressed by dendritic cells (DCs). Detected in both immature and mature DCs. Highly expressed in lymph nodes, lung, kidney and liver. Expressed at lower levels in pancreas, bone marrow, spleen, leukocytes, in freshly isolated peripheral blood mononuclear cells (PBMC) and B-cells. Not expressed in freshly isolated monocytes.

It is found in the cell membrane. Its subcellular location is the endoplasmic reticulum membrane. It localises to the endoplasmic reticulum-Golgi intermediate compartment membrane. The protein resides in the endosome. Probable cell surface receptor that plays several roles in cellular fusion, cell differentiation, bone and immune homeostasis. Plays a role in TNFSF11-mediated osteoclastogenesis. Cooperates with OCSTAMP in modulating cell-cell fusion in both osteoclasts and foreign body giant cells (FBGCs). Participates in osteoclast bone resorption. Involved in inducing the expression of tartrate-resistant acid phosphatase in osteoclast precursors. Plays a role in haematopoietic stem cell differentiation of bone marrow cells toward the myeloid lineage. Inhibits the development of neutrophilic granulocytes. Plays also a role in the regulation of dendritic cell (DC) antigen presentation activity by controlling phagocytic activity. Involved in the maintenance of immune self-tolerance and avoidance of autoimmune reactions. The chain is Dendritic cell-specific transmembrane protein (DCSTAMP) from Homo sapiens (Human).